The chain runs to 76 residues: Small, acid-soluble spore protein Tlp (76 aa).

Basic and acidic residues-rich tracts occupy residues 1–15, 26–38, and 46–76; these read MAKR…ERIE, DEAR…HSEE, and EIEQ…KNNS. Residues 1–76 form a disordered region; the sequence is MAKRDDRSNN…DEVNDQKNNS (76 aa).

This sequence belongs to the Tlp family.

It localises to the spore core. In Shouchella clausii (strain KSM-K16) (Alkalihalobacillus clausii), this protein is Small, acid-soluble spore protein Tlp.